A 627-amino-acid polypeptide reads, in one-letter code: Pheromone B alpha 2 receptor (627 aa).

Residues Met1–Pro7 lie on the Extracellular side of the membrane. Residues Ala8–Leu28 traverse the membrane as a helical segment. Topologically, residues Gln29–Thr35 are cytoplasmic. A helical transmembrane segment spans residues Cys36 to Trp56. Residues Lys57–Glu69 are Extracellular-facing. The helical transmembrane segment at Ile70–Val90 threads the bilayer. The Cytoplasmic segment spans residues Arg91–Ala102. Residues Val103 to Val123 traverse the membrane as a helical segment. Residues Val124–Leu150 lie on the Extracellular side of the membrane. A helical membrane pass occupies residues Thr151–Ile171. Topologically, residues Gln172–Arg197 are cytoplasmic. Residues Leu198 to Ile218 form a helical membrane-spanning segment. Over Leu219–Tyr260 the chain is Extracellular. The chain crosses the membrane as a helical span at residues Glu261–Ala281. Residues Gln282–Val627 lie on the Cytoplasmic side of the membrane. 3 disordered regions span residues Leu363 to Ile405, Thr479 to Ala505, and Leu518 to Val627. Over residues Ser372–Ser387 the composition is skewed to low complexity. Composition is skewed to polar residues over residues Pro519–Thr533 and Ser545–Met555. Over residues Ala569–Ala607 the composition is skewed to low complexity.

Belongs to the G-protein coupled receptor 4 family.

The protein localises to the cell membrane. Functionally, receptor for the BAP2 pheromone, a prenylated mating factor. The receptor/pheromone interaction may have a role in the fusion of clamp cells. This chain is Pheromone B alpha 2 receptor (BAR2), found in Schizophyllum commune (Split gill fungus).